A 238-amino-acid polypeptide reads, in one-letter code: Ribitol-5-phosphate cytidylyltransferase (238 aa).

CTP-binding positions include 7-10 (FAGG) and 80-86 (GETGQES).

It belongs to the IspD/TarI cytidylyltransferase family. TarI subfamily.

The catalysed reaction is D-ribitol 5-phosphate + CTP + H(+) = CDP-L-ribitol + diphosphate. Its function is as follows. Catalyzes the transfer of the cytidylyl group of CTP to D-ribitol 5-phosphate. In Vibrio parahaemolyticus serotype O3:K6 (strain RIMD 2210633), this protein is Ribitol-5-phosphate cytidylyltransferase.